The primary structure comprises 76 residues: Sulfur carrier protein TusA (76 aa).

The active-site Cysteine persulfide intermediate is Cys-14.

The protein belongs to the sulfur carrier protein TusA family. In terms of assembly, interacts with IscS.

It is found in the cytoplasm. The protein operates within tRNA modification. Functionally, sulfur carrier protein involved in sulfur trafficking in the cell. Part of a sulfur-relay system required for 2-thiolation during synthesis of 2-thiouridine of the modified wobble base 5-methylaminomethyl-2-thiouridine (mnm(5)s(2)U) in tRNA. Interacts with IscS and stimulates its cysteine desulfurase activity. Accepts an activated sulfur from IscS, which is then transferred to TusD, and thus determines the direction of sulfur flow from IscS to 2-thiouridine formation. Also appears to be involved in sulfur transfer for the biosynthesis of molybdopterin. The polypeptide is Sulfur carrier protein TusA (Buchnera aphidicola subsp. Acyrthosiphon pisum (strain Tuc7)).